The chain runs to 537 residues: Berberine bridge enzyme-like 26 (537 aa).

Residues 1–27 (MGISKPLPLFSILVLYFSLYTITPTSS) form the signal peptide. A disulfide bridge links cysteine 38 with cysteine 102. Asparagine 59 carries N-linked (GlcNAc...) asparagine glycosylation. Residues 80–256 (SMPKPGFIFS…LAWKIKLVPV (177 aa)) form the FAD-binding PCMH-type domain. The 6-(S-cysteinyl)-8alpha-(pros-histidyl)-FAD (His-Cys) cross-link spans 117-181 (HDYEGLSYVS…KVHGFPAGLC (65 aa)). Asparagine 306 carries N-linked (GlcNAc...) asparagine glycosylation.

The protein belongs to the oxygen-dependent FAD-linked oxidoreductase family. FAD is required as a cofactor. In terms of processing, the FAD cofactor is bound via a bicovalent 6-S-cysteinyl, 8alpha-N1-histidyl FAD linkage.

It localises to the secreted. It is found in the cell wall. This is Berberine bridge enzyme-like 26 from Arabidopsis thaliana (Mouse-ear cress).